The sequence spans 411 residues: Meiotic driver wtf33 (411 aa).

A disordered region spans residues 1–95 (MKNKYYPLRS…ENHSSGTADN (95 aa)). Positions 11–29 (SMDELSTKNDNEIDLEKGP) are enriched in basic and acidic residues. A compositionally biased stretch (polar residues) spans 57–72 (GANNPNLFNTDESTTP). 6 consecutive transmembrane segments (helical) span residues 104–124 (AILSFIPIFVLNVSAVCYLTY), 137–157 (WVYFGMWCASCLMILISLWCF), 244–264 (EMMIIIWILWLIICCILFGCV), 281–301 (TISAVLFLIVSSVCIPIWTLW), 303–323 (ALSGMLQVLGIHGIIAVLVNG), and 336–356 (GYEIEGFVLFFTSSALFLYEM).

Belongs to the WTF family. Homomer. Forms protein aggregates. The two isoforms can interact with each other and with themselves. High sequence similarity is required for their interaction.

It localises to the spore membrane. The protein resides in the vacuole membrane. The protein localises to the ascus epiplasm. Its subcellular location is the cytoplasm. It is found in the endoplasmic reticulum membrane. Its function is as follows. Promotes unequal transmission of alleles from the parental zygote to progeny spores by acting as poison/antidote system where the poison and antidote proteins are produced from the same locus; the poison component is trans-acting and targets all spores within an ascus whereas the antidote component is spore-specific, leading to poisoning of all progeny that do not inherit the allele. In terms of biological role, localizes isoform 2 to the vacuole thereby facilitating its degradation. Functionally, forms toxic aggregates that disrupt spore maturation. This chain is Meiotic driver wtf33, found in Schizosaccharomyces kambucha (Fission yeast).